Consider the following 78-residue polypeptide: Large ribosomal subunit protein uL24 (78 aa).

The protein belongs to the universal ribosomal protein uL24 family. Part of the 50S ribosomal subunit.

In terms of biological role, one of two assembly initiator proteins, it binds directly to the 5'-end of the 23S rRNA, where it nucleates assembly of the 50S subunit. Its function is as follows. One of the proteins that surrounds the polypeptide exit tunnel on the outside of the subunit. In Helicobacter hepaticus (strain ATCC 51449 / 3B1), this protein is Large ribosomal subunit protein uL24.